Here is a 353-residue protein sequence, read N- to C-terminus: UPF0283 membrane protein YcjF (353 aa).

Residues methionine 1–proline 19 show a composition bias toward basic and acidic residues. The interval methionine 1–arginine 35 is disordered. Transmembrane regions (helical) follow at residues methionine 70–threonine 90, valine 100–valine 120, and glutamate 213–tryptophan 233.

Belongs to the UPF0283 family.

It localises to the cell inner membrane. The polypeptide is UPF0283 membrane protein YcjF (Salmonella paratyphi C (strain RKS4594)).